The following is a 341-amino-acid chain: Putative gustatory receptor 9a (341 aa).

A topological domain (cytoplasmic) is located at residue M1. The helical transmembrane segment at 2–22 (SLWLEHFLTGYFQLCGLVCGW) threads the bilayer. The Extracellular portion of the chain corresponds to 23–30 (SGSRLGRL). A helical membrane pass occupies residues 31 to 51 (LSSTFLVLILIELVGEIETYF). Residues 52-68 (TEENPDNESVPAYFAKV) lie on the Cytoplasmic side of the membrane. The helical transmembrane segment at 69–89 (IMGVNMAYKMIHAWIALSALF) threads the bilayer. At 90–113 (ECRRFRYLLEELPPVKATSFIYRH) the chain is on the extracellular side. Residues 114-134 (LILEIILFACNAFLVLSEYTI) traverse the membrane as a helical segment. Residues 135-202 (RGIYLENLRY…LAKVTRSLSH (68 aa)) are Cytoplasmic-facing. The chain crosses the membrane as a helical span at residues 203-223 (LFGLSLLLLNVLCLGDWIIVC). The Extracellular segment spans residues 224–233 (NVYFMVAYLQ). Residues 234–254 (VLPATLFLFGQVMFVVCPTLI) traverse the membrane as a helical segment. Residues 255-318 (KIWSICAASH…GIYHLNLQTL (64 aa)) are Cytoplasmic-facing. Residues 319 to 339 (AGMFFFILEALVIFLQFVSLV) traverse the membrane as a helical segment. Residues 340-341 (RT) lie on the Extracellular side of the membrane.

The protein belongs to the insect chemoreceptor superfamily. Gustatory receptor (GR) family. Gr2a subfamily. Expressed in neurons of the terminal external chemosensory organ of larvae.

It is found in the cell membrane. In terms of biological role, probable gustatory receptor which mediates acceptance or avoidance behavior, depending on its substrates. The protein is Putative gustatory receptor 9a (Gr9a) of Drosophila melanogaster (Fruit fly).